The chain runs to 134 residues: Probable RNA-binding protein MJ0652 (134 aa).

The CRM domain occupies 11 to 108 (RKLTGKMKRM…REGWKKYLAK (98 aa)).

The protein is Probable RNA-binding protein MJ0652 of Methanocaldococcus jannaschii (strain ATCC 43067 / DSM 2661 / JAL-1 / JCM 10045 / NBRC 100440) (Methanococcus jannaschii).